Consider the following 81-residue polypeptide: Large ribosomal subunit protein bL28 (81 aa).

Belongs to the bacterial ribosomal protein bL28 family. In terms of assembly, part of the 50S ribosomal subunit.

This chain is Large ribosomal subunit protein bL28, found in Deinococcus radiodurans (strain ATCC 13939 / DSM 20539 / JCM 16871 / CCUG 27074 / LMG 4051 / NBRC 15346 / NCIMB 9279 / VKM B-1422 / R1).